We begin with the raw amino-acid sequence, 1024 residues long: Myosin phosphatase Rho-interacting protein (1024 aa).

The interval 1–382 (MSAAKENPCR…DRRSTESSMT (382 aa)) is interaction with F-actin. The PH 1 domain maps to 43–150 (KPIYGGWLLL…WLEMLMVYPR (108 aa)). Positions 152–262 (NKQNQKKKRK…GDRVDGGRKV (111 aa)) are disordered. The span at 179–190 (SSSGGSSGSSSS) shows a compositional bias: low complexity. A phosphoserine mark is found at S193, S219, S221, S225, and S227. Positions 221–233 (SPAQSPSQSQPPA) are enriched in low complexity. Residues 240-262 (PGLESKEDESTISGDRVDGGRKV) show a composition bias toward basic and acidic residues. Phosphoserine occurs at positions 266, 270, 289, and 292. Disordered stretches follow at residues 274-301 (AKQD…SRRS) and 328-379 (PSSD…STES). T295 is subject to Phosphothreonine. Over residues 333-349 (RQGRSERRAIPRKRDFA) the composition is skewed to basic and acidic residues. The residue at position 364 (S364) is a Phosphoserine. In terms of domain architecture, PH 2 spans 386–482 (LNFKKGWLTK…WIQTIMKHVL (97 aa)). Positions 486 to 583 (APDVTSSLPE…AEPGELERER (98 aa)) are disordered. Polar residues predominate over residues 488-508 (DVTSSLPEGKNKSTSFETCSR). S492 is subject to Phosphoserine. The segment covering 522–545 (PEQKKSRARERRREGRSKTFDWAE) has biased composition (basic and acidic residues). Residues 545–823 (EFRPIQQALA…SVQRELEVLS (279 aa)) are interaction with RHOA. S617 is subject to Phosphoserine. A Phosphothreonine modification is found at T645. The stretch at 672-976 (HELTSLLEKE…AATEALGEKS (305 aa)) forms a coiled coil. S799 is subject to Phosphoserine. Residues 823–878 (SEQYSQKCLENAHLAQALEAERQALRQCQRENQELNAHNQELNNRLAAEITRLRTL) are interaction with PPP1R12A. Residues 972–995 (LGEKSPEGTTVSGYDIMKSKSNPD) are disordered. S976, G979, S992, S1013, and S1015 each carry phosphoserine.

Binds RHOA, PPP1R12A/MBS and PPP1R12C/MBS85 through adjacent coiled coil domains. Interacts with MYZAP. Binds F-actin through its N-terminus. In terms of tissue distribution, expressed in Kidney, Brain, Heart and Lung.

The protein localises to the cytoplasm. Its subcellular location is the cytoskeleton. Its function is as follows. Targets myosin phosphatase to the actin cytoskeleton. Required for the regulation of the actin cytoskeleton by RhoA and ROCK1. Depletion leads to an increased number of stress fibers in smooth muscle cells through stabilization of actin fibers by phosphorylated myosin. Overexpression of MRIP as well as its F-actin-binding region leads to disassembly of stress fibers in neuronal cells. This chain is Myosin phosphatase Rho-interacting protein (Mprip), found in Mus musculus (Mouse).